A 960-amino-acid chain; its full sequence is Ran GTPase-activating protein 2 (960 aa).

5 LRR repeats span residues 69-92 (HLNLEVLDFRGNTLSVLAGKLIAE), 132-156 (GCRLTTLDLSDNAFGAGLSTSLYNF), 162-185 (LYSLENLILNNNGLGLAGKTVGKA), 227-254 (LGTLEEIRLPQNGIRDDGIIALAEAFRM), and 313-340 (RDCLKKVVLSGNNITSDVIDEIGACFNS). The interval 370 to 408 (NIDFGRRGDDELLSSDEEEEQGAEDASMEEDAFNTSRET) is disordered. Over residues 380–401 (ELLSSDEEEEQGAEDASMEEDA) the composition is skewed to acidic residues. LRR repeat units lie at residues 475–498 (ASSMKALELRGNTLGIAAGNVIAK), 538–561 (GCKIKELDLSDNAFGPIGADALKD), 568–595 (SFSLEVLKLNNNGLGIGGKQIAKSLTEC), and 663–685 (NRNLRYLWLEDNTVLPKGAKALA). Residues 777-819 (PENVNVGDEDDDLGSLDGDQEEYNSKSSDSEDADLDDDDEDDD) are disordered. Composition is skewed to acidic residues over residues 783–798 (GDEDDDLGSLDGDQEE) and 806–819 (SEDADLDDDDEDDD).

It is found in the nucleus. In terms of biological role, GTPase system comprising ran-1, ran-2 and ran-3 is essential in nucleocytoplasmic trafficking. Ran-2 is a GTPase activator for the nuclear RAS-related regulatory protein Ran, converting it to the putatively inactive GDP-bound state. Required for correct chromosome alignment and segregation on the metaphase plate. This is Ran GTPase-activating protein 2 (ran-2) from Caenorhabditis elegans.